The sequence spans 422 residues: G-protein coupled receptor 83 (422 aa).

The first 17 residues, 1-17, serve as a signal peptide directing secretion; the sequence is MNVPPVLLLFLLSSVRA. The Extracellular segment spans residues 18–70; that stretch reads TEQPQVVTEHPSMDAALTGANASHFWANYTFSDWQNFVGRRRYGAESQNPTVK. Residues 71 to 91 form a helical membrane-spanning segment; sequence ALLIVAYSFIIVFSLFGNVLV. Residues 92-106 are Cytoplasmic-facing; that stretch reads CHVIFKNQRMHSATS. Residues 107-127 traverse the membrane as a helical segment; it reads LFIVNLAVADIMITLLNTPFT. The Extracellular segment spans residues 128-143; that stretch reads LVRFVNSTWVFGKGMC. A disulfide bond links cysteine 143 and cysteine 223. The chain crosses the membrane as a helical span at residues 144–166; it reads HVSRFAQYCSLHVSALTLTAIAV. At 167 to 184 the chain is on the cytoplasmic side; the sequence is DRHQVIMHPLKPRISITK. The chain crosses the membrane as a helical span at residues 185 to 205; sequence GVIYIAVIWVMATFFSLPHAI. The Extracellular portion of the chain corresponds to 206–236; that stretch reads CQKLFTFKYSEDIVRSLCLPDFPEPADLFWK. Residues 237–257 form a helical membrane-spanning segment; it reads YLDLATFILLYLLPLFIISVA. The Cytoplasmic portion of the chain corresponds to 258–292; the sequence is YARVAKKLWLCNTIGDVTTEQYLALRRKKKTTVKM. A helical transmembrane segment spans residues 293–313; sequence LVLVVVLFALCWFPLNCYVLL. Residues 314–326 lie on the Extracellular side of the membrane; the sequence is LSSKAIHTNNALY. The helical transmembrane segment at 327–347 threads the bilayer; sequence FAFHWFAMSSTCYNPFIYCWL. Residues 348-422 lie on the Cytoplasmic side of the membrane; the sequence is NENFRVELKA…SSVEPTVAVS (75 aa). The segment at 401-422 is disordered; sequence PSSQIQSGKTDLSSVEPTVAVS.

It belongs to the G-protein coupled receptor 1 family. As to expression, expressed preferentially in brain, and its neuronal expression is relegated to limbic brain regions, particularly in forebrain.

It localises to the cell membrane. G-protein coupled receptor for PEN, a neuropeptide produced from the precursor protein, proSAAS (encoded by PCSK1N). Acts through a G(i)- and G(q)-alpha-alpha-mediated pathway in response to PEN. Plays a role in food intake and body weight regulation. May contribute to the regulation of anxiety-related behaviors. This is G-protein coupled receptor 83 from Rattus norvegicus (Rat).